The chain runs to 158 residues: 3-hydroxyacyl-[acyl-carrier-protein] dehydratase FabZ (158 aa).

Residue H60 is part of the active site.

The protein belongs to the thioester dehydratase family. FabZ subfamily.

The protein resides in the cytoplasm. The enzyme catalyses a (3R)-hydroxyacyl-[ACP] = a (2E)-enoyl-[ACP] + H2O. Functionally, involved in unsaturated fatty acids biosynthesis. Catalyzes the dehydration of short chain beta-hydroxyacyl-ACPs and long chain saturated and unsaturated beta-hydroxyacyl-ACPs. The chain is 3-hydroxyacyl-[acyl-carrier-protein] dehydratase FabZ from Zymomonas mobilis subsp. mobilis (strain ATCC 31821 / ZM4 / CP4).